The following is a 184-amino-acid chain: Tumor necrosis factor alpha-induced protein 8-like protein 2 (184 aa).

A Phosphoserine modification is found at S3.

This sequence belongs to the TNFAIP8 family. TNFAIP8L2 subfamily. As to quaternary structure, may interact with CASP8; however, such result is unclear since could not reproduce the interaction with CASP8. Interacts with RAC1. Phosphorylated by TAK1/MAP3K7; this phosphorylation triggers association with BTRC and subsequent ubiquitination and degradation. Post-translationally, ubiquitinated in a BTRC-depdent manner; leading to degradation mediated through the proteasome pathway.

It is found in the cytoplasm. It localises to the nucleus. Its subcellular location is the lysosome. Functionally, acts as a negative regulator of innate and adaptive immunity by maintaining immune homeostasis. Plays a regulatory role in the Toll-like signaling pathway by determining the strength of LPS-induced signaling and gene expression. Inhibits TCR-mediated T-cell activation and negatively regulate T-cell function to prevent hyperresponsiveness. Also inhibits autolysosome formation via negatively modulating MTOR activation by interacting with RAC1 and promoting the disassociation of the RAC1-MTOR complex. Plays an essential role in NK-cell biology by acting as a checkpoint and displaying an expression pattern correlating with NK-cell maturation process and by negatively regulating NK-cell maturation and antitumor immunity. Mechanistically, suppresses IL-15-triggered mTOR activity in NK-cells. The polypeptide is Tumor necrosis factor alpha-induced protein 8-like protein 2 (Tnfaip8l2) (Rattus norvegicus (Rat)).